We begin with the raw amino-acid sequence, 253 residues long: Protein C1orf43 (253 aa).

The chain crosses the membrane as a helical span at residues Val-11 to Val-31.

The protein resides in the membrane. The protein localises to the golgi apparatus. Its subcellular location is the mitochondrion. Its function is as follows. General regulator of phagocytosis. Required to uptake Gram negative bacterium by macrophages. The sequence is that of Protein C1orf43 (C1orf43) from Homo sapiens (Human).